Here is a 348-residue protein sequence, read N- to C-terminus: GTPase Obg (348 aa).

The Obg domain maps to 1-159 (MKFLDQAKIY…KTIILRLKLI (159 aa)). An OBG-type G domain is found at 160-327 (ADAGLVGLPN…VLRLAADEIW (168 aa)). GTP-binding positions include 166–173 (GLPNAGKS), 191–195 (FTTLT), 212–215 (DIPG), 279–282 (NKMD), and 308–310 (SGV). Mg(2+) is bound by residues S173 and T193.

The protein belongs to the TRAFAC class OBG-HflX-like GTPase superfamily. OBG GTPase family. Monomer. Mg(2+) serves as cofactor.

It localises to the cytoplasm. An essential GTPase which binds GTP, GDP and possibly (p)ppGpp with moderate affinity, with high nucleotide exchange rates and a fairly low GTP hydrolysis rate. Plays a role in control of the cell cycle, stress response, ribosome biogenesis and in those bacteria that undergo differentiation, in morphogenesis control. This chain is GTPase Obg, found in Parvibaculum lavamentivorans (strain DS-1 / DSM 13023 / NCIMB 13966).